Reading from the N-terminus, the 632-residue chain is tRNA uridine 5-carboxymethylaminomethyl modification enzyme MnmG (632 aa).

Residues 15 to 20 (GAGHAG), valine 127, and serine 182 contribute to the FAD site. 276 to 290 (GARYCPSIEDKIVRF) is a binding site for NAD(+). Glutamine 373 provides a ligand contact to FAD.

The protein belongs to the MnmG family. Homodimer. Heterotetramer of two MnmE and two MnmG subunits. FAD serves as cofactor.

It is found in the cytoplasm. Its function is as follows. NAD-binding protein involved in the addition of a carboxymethylaminomethyl (cmnm) group at the wobble position (U34) of certain tRNAs, forming tRNA-cmnm(5)s(2)U34. The chain is tRNA uridine 5-carboxymethylaminomethyl modification enzyme MnmG from Enterococcus faecalis (strain ATCC 700802 / V583).